Consider the following 279-residue polypeptide: Histone chaperone ASF1 (279 aa).

The interaction with HIR1 stretch occupies residues Met-1–Lys-143. Residues Met-1–Asn-155 are interaction with histone H3, histone H4, RAD53 and the RF-C complex. Residues Glu-156–Asn-279 are disordered. Residues Gly-168–Gly-244 show a composition bias toward acidic residues. A coiled-coil region spans residues Asp-192 to Val-243. Composition is skewed to basic and acidic residues over residues Ser-245–Asp-254 and Ser-269–Asn-279.

This sequence belongs to the ASF1 family. Interacts with histone H3/H4 heterodimers via both histone H3 and histone H4. Binds with higher affinity to H3/H4 heterodimers where histone H3 has been pre-acetylated on 'Lys-14'. Interacts with RAD53 and this may impair interaction with histones and chromatin assembly; the interaction is reduced upon activation of DNA damage or replication checkpoints which in turn promotes histone binding and chromatin assembly. Interacts with the CAC2 subunit of chromatin assembly factor 1 (CAF-1). Interacts with the HIR1, HIR2, HIR3 and HPC2 subunits of the HIR complex. Interacts with the RFC1, RFC2, RFC3, RFC4 and RFC5 subunits of the replication factor C (RF-C/RFC) complex; which may recruit this protein to DNA. Interacts with the SAS2, SAS4 and SAS5 subunits of the SAS/SAS-I complex. Interacts with the BDF1, BDF2, SPT15, TAF1 and TAF7 subunits of the TFIID complex. Interacts with RTT109 and VPS75; the interaction with RTT109 is direct.

The protein resides in the nucleus. Functionally, histone chaperone that facilitates histone deposition and histone exchange and removal during nucleosome assembly and disassembly. Facilitates histone deposition through both replication-dependent and replication-independent chromatin assembly pathways. Cooperates with chromatin assembly factor 1 (CAF-1) to promote replication-dependent chromatin assembly and with the HIR complex to promote replication-independent chromatin assembly, which may occur during transcription and DNA repair. May be required for the maintenance of a subset of replication elongation factors, including DNA polymerase epsilon, the RFC complex and PCNA, at stalled replication forks. Also required for RTT109-dependent acetylation of histone H3 on 'Lys-9' and 'Lys-56'. Promotion of RTT109-mediated histone H3 'Lys-56' acetylation is dependent on interactions with histone H3 pre-acetylated on 'Lys-14'. The polypeptide is Histone chaperone ASF1 (Saccharomyces cerevisiae (strain ATCC 204508 / S288c) (Baker's yeast)).